The following is a 65-amino-acid chain: Large ribosomal subunit protein bL35 (65 aa).

Residues 1–46 are disordered; that stretch reads MPKMKTRQSAAKRYEVTGSGKLRRRRAGKNHLLQHKSAARKRSLST. The segment covering 21–44 has biased composition (basic residues); that stretch reads KLRRRRAGKNHLLQHKSAARKRSL.

It belongs to the bacterial ribosomal protein bL35 family.

The sequence is that of Large ribosomal subunit protein bL35 from Gloeobacter violaceus (strain ATCC 29082 / PCC 7421).